The chain runs to 129 residues: Small ribosomal subunit protein uS11 (129 aa).

Residues 108-129 are disordered; it reads TPIPHNGTRPPKRVLKRLRLKK. The span at 117-129 shows a compositional bias: basic residues; sequence PPKRVLKRLRLKK.

This sequence belongs to the universal ribosomal protein uS11 family. In terms of assembly, part of the 30S ribosomal subunit. Interacts with proteins S7 and S18. Binds to IF-3.

Functionally, located on the platform of the 30S subunit, it bridges several disparate RNA helices of the 16S rRNA. Forms part of the Shine-Dalgarno cleft in the 70S ribosome. The polypeptide is Small ribosomal subunit protein uS11 (Mycoplasmopsis synoviae (strain 53) (Mycoplasma synoviae)).